Here is a 215-residue protein sequence, read N- to C-terminus: Ribose-5-phosphate isomerase A (215 aa).

Residues 26-29 (TGST), 79-82 (DGAD), and 92-95 (KGGG) contribute to the substrate site. Glutamate 101 serves as the catalytic Proton acceptor. Lysine 119 contributes to the substrate binding site.

It belongs to the ribose 5-phosphate isomerase family. Homodimer.

It catalyses the reaction aldehydo-D-ribose 5-phosphate = D-ribulose 5-phosphate. It participates in carbohydrate degradation; pentose phosphate pathway; D-ribose 5-phosphate from D-ribulose 5-phosphate (non-oxidative stage): step 1/1. Catalyzes the reversible conversion of ribose-5-phosphate to ribulose 5-phosphate. This Stenotrophomonas maltophilia (strain R551-3) protein is Ribose-5-phosphate isomerase A.